Consider the following 141-residue polypeptide: Large ribosomal subunit protein uL11 (141 aa).

It belongs to the universal ribosomal protein uL11 family. In terms of assembly, part of the ribosomal stalk of the 50S ribosomal subunit. Interacts with L10 and the large rRNA to form the base of the stalk. L10 forms an elongated spine to which L12 dimers bind in a sequential fashion forming a multimeric L10(L12)X complex. Post-translationally, one or more lysine residues are methylated.

In terms of biological role, forms part of the ribosomal stalk which helps the ribosome interact with GTP-bound translation factors. The sequence is that of Large ribosomal subunit protein uL11 from Clostridium perfringens (strain ATCC 13124 / DSM 756 / JCM 1290 / NCIMB 6125 / NCTC 8237 / Type A).